We begin with the raw amino-acid sequence, 674 residues long: Glutaminase kidney isoform, mitochondrial (674 aa).

The N-terminal 54 residues, 1 to 54, are a transit peptide targeting the mitochondrion; it reads MMRLRGSAMLRELLLRPPAAVGGVLRRTQPLGTLCRRPRGGSRPAAGLVAAARL. The segment at 56 to 123 is disordered; that stretch reads PWWGGGGRAK…PGETDAFGNS (68 aa). The segment covering 58 to 71 has biased composition (gly residues); that stretch reads WGGGGRAKGPGSGG. Residues 89 to 101 show a composition bias toward low complexity; sequence PPQQQQQQQQQPG. N6-succinyllysine is present on residues Lys135 and Lys169. Ser291 contacts substrate. Position 316 is an N6-acetyllysine (Lys316). The highly mobile activation loop stretch occupies residues 320 to 327; sequence GLRFNKLF. Substrate is bound by residues Asn340, Glu386, Asn393, Tyr419, Tyr471, and Val489. 2 ANK repeats span residues 590–619 and 624–653; these read DSRTALHVAAAEGHVEVVKFLLEACKVNPF and WNNTPMDEALHFGHHDVFKILQEYQVQYTP. The disordered stretch occupies residues 652-674; the sequence is TPQGDSDDGKENQTVHKNLDGLL. Residue Ser657 is modified to Phosphoserine. Residues 658 to 674 are compositionally biased toward basic and acidic residues; it reads DDGKENQTVHKNLDGLL.

It belongs to the glutaminase family. As to quaternary structure, homotetramer, dimer of dimers. Tetramer composed of 68 and 65 kDa peptides in a 1:3 ratio. Can assemble into higher oligomers (in vitro), but the physiological significance of this is not clear. Interacts with RAF1 and MAP2K2. Interacts with ATCAY; the interaction is direct and may control GLS localization, negatively regulating its activity. Synthesized as a 74-kDa cytosolic precursor which is proteolytically processed by the mitochondrial-processing peptidase (MPP) via a 72-kDa intermediate to yield the mature mitochondrial 68- and 65-kDa subunits. Kidney, brain, and intestine.

It localises to the mitochondrion. The protein resides in the cytoplasm. It is found in the cytosol. The protein localises to the mitochondrion matrix. The enzyme catalyses L-glutamine + H2O = L-glutamate + NH4(+). Enzyme activity is increased by phosphate, due to increased kcat and increased substrate affinity. Catalyzes the first reaction in the primary pathway for the renal catabolism of glutamine. Plays a role in maintaining acid-base homeostasis. Regulates the levels of the neurotransmitter glutamate, the main excitatory neurotransmitter in the brain. The chain is Glutaminase kidney isoform, mitochondrial (Gls) from Rattus norvegicus (Rat).